The following is a 306-amino-acid chain: MNNNYHTQINRPNMLNEIAANNNLLNNKNNQTNQLNNNQYNNQYNNQNNNQNYPQNYPQNSQQNFQQNSQQNHQQNYQQNYPQKFPHQQNNITEDLVDIELSDSKESGSEYPQSVQQTHQQPIQNNPSIPNNQPNQINQYNQQPNQYNHQQPNQFTQNQPNQPNQPNQHNQYSQHNQPNQSNQPNQYNQNNQFAQPNQYNQSGQLNHTNKINKQIQKQLDKNQPEKIPSKPEKNQKQSHKPKLPPTMQHGPLPIHGMPIQHMPPQLPMQTEYCKKSNSLFDYIIIPIALVLVFLFLVHPKTFQNNW.

Residues 13–39 adopt a coiled-coil conformation; sequence NMLNEIAANNNLLNNKNNQTNQLNNNQ. 3 disordered regions span residues 44-76, 103-204, and 216-249; these read YNNQNNNQNYPQNYPQNSQQNFQQNSQQNHQQN, DSKE…QSGQ, and QKQLDKNQPEKIPSKPEKNQKQSHKPKLPPTMQH. Residues 119-201 are compositionally biased toward low complexity; the sequence is HQQPIQNNPS…QFAQPNQYNQ (83 aa). Basic and acidic residues predominate over residues 218 to 235; it reads QLDKNQPEKIPSKPEKNQ. Residues 279 to 299 form a helical membrane-spanning segment; the sequence is LFDYIIIPIALVLVFLFLVHP.

It is found in the membrane. This is an uncharacterized protein from Acanthamoeba polyphaga mimivirus (APMV).